Here is a 291-residue protein sequence, read N- to C-terminus: Probable cell wall amidase LytH (291 aa).

The first 40 residues, 1–40, serve as a signal peptide directing secretion; that stretch reads MKKIEAWLSKKGLKNKRTLIVVIAFVLFIIFLFLLLNSNS. The SH3b domain maps to 41-105; sequence EDSGNITITE…WIAGWHTNLD (65 aa). The disordered stretch occupies residues 118–140; that stretch reads QGKTIVLDPGHGGSDQGASSNTK. One can recognise a MurNAc-LAA domain in the interval 122–286; it reads IVLDPGHGGS…LEQAIVDGLK (165 aa).

This sequence belongs to the N-acetylmuramoyl-L-alanine amidase 3 family.

The protein resides in the secreted. Its function is as follows. Probably involved in cell-wall metabolism. In Staphylococcus aureus (strain USA300), this protein is Probable cell wall amidase LytH (lytH).